The chain runs to 358 residues: Peptide chain release factor 1 (358 aa).

At glutamine 237 the chain carries N5-methylglutamine.

This sequence belongs to the prokaryotic/mitochondrial release factor family. Post-translationally, methylated by PrmC. Methylation increases the termination efficiency of RF1.

It localises to the cytoplasm. Its function is as follows. Peptide chain release factor 1 directs the termination of translation in response to the peptide chain termination codons UAG and UAA. The protein is Peptide chain release factor 1 of Mycoplasma mobile (strain ATCC 43663 / 163K / NCTC 11711) (Mesomycoplasma mobile).